The sequence spans 905 residues: Transcriptional regulator MNL1 (905 aa).

The segment covering 1–29 (MDSHNNIDQSVSELLSDPASVQQSYNSQL) has biased composition (polar residues). 8 disordered regions span residues 1 to 34 (MDSH…GPEF), 312 to 340 (QTQA…ASHT), 383 to 419 (MDQV…NARY), 434 to 460 (SEKN…NLLS), 525 to 544 (TKEE…KPKR), 584 to 613 (NISS…SESS), 625 to 671 (NVGK…GTVE), and 685 to 733 (PASE…TSST). Residues 312-334 (QTQAQAQAHQQQQQQSQQQHSPQ) are compositionally biased toward low complexity. Residues 439 to 460 (NHNNRSPPTPPTSTSSPQNLLS) are compositionally biased toward low complexity. Residues 584–598 (NISSHHSSGTPSITT) show a composition bias toward polar residues. Residues 628-639 (KRKNKSYRKPKG) are compositionally biased toward basic residues. Composition is skewed to low complexity over residues 647-669 (QQQQ…STGT) and 690-710 (SSLL…EASS). 2 consecutive C2H2-type zinc fingers follow at residues 832–855 (YLCN…RSLH) and 861–883 (YNCD…LKIH). The tract at residues 885 to 905 (QEDEKDCADAETGVGMDDASG) is disordered.

It localises to the nucleus. Functionally, transcription factor that activates stress response genes via SLE (STRE-like) elements. Required for adaptation to weak acid stress such as acetic acid stress, but seems not involved in the response to heat, osmotic, ethanol, nutrient, oxidative, or heavy-metal stress. Activates a subset of the genes that are repressed by NRG1. The sequence is that of Transcriptional regulator MNL1 (MNL1) from Candida albicans (strain SC5314 / ATCC MYA-2876) (Yeast).